The primary structure comprises 48 residues: Ambineela (48 aa).

As to quaternary structure, monomer. In terms of processing, the blue color is due to an unidentified non-fluorescent cofactor, covalently bound to it.

Ambineela is a blue protein and has a pI of 8.7. This is Ambineela from Acidianus ambivalens (Desulfurolobus ambivalens).